A 251-amino-acid polypeptide reads, in one-letter code: Small ribosomal subunit protein uS2 (251 aa).

Belongs to the universal ribosomal protein uS2 family.

In Azoarcus sp. (strain BH72), this protein is Small ribosomal subunit protein uS2.